Reading from the N-terminus, the 263-residue chain is 3-methyl-2-oxobutanoate hydroxymethyltransferase (263 aa).

Mg(2+) contacts are provided by aspartate 43 and aspartate 82. Residues 43 to 44 (DS), aspartate 82, and lysine 111 contribute to the 3-methyl-2-oxobutanoate site. Glutamate 113 lines the Mg(2+) pocket. Residue glutamate 179 is the Proton acceptor of the active site.

It belongs to the PanB family. Homodecamer; pentamer of dimers. Requires Mg(2+) as cofactor.

The protein localises to the cytoplasm. The enzyme catalyses 3-methyl-2-oxobutanoate + (6R)-5,10-methylene-5,6,7,8-tetrahydrofolate + H2O = 2-dehydropantoate + (6S)-5,6,7,8-tetrahydrofolate. It participates in cofactor biosynthesis; (R)-pantothenate biosynthesis; (R)-pantoate from 3-methyl-2-oxobutanoate: step 1/2. Its function is as follows. Catalyzes the reversible reaction in which hydroxymethyl group from 5,10-methylenetetrahydrofolate is transferred onto alpha-ketoisovalerate to form ketopantoate. In Neisseria meningitidis serogroup B (strain ATCC BAA-335 / MC58), this protein is 3-methyl-2-oxobutanoate hydroxymethyltransferase.